The chain runs to 3013 residues: DmX-like protein 1 (3013 aa).

WD repeat units follow at residues 108–145 (FLDSIAHNITWDPAGNRLLTGSSCLQLWCNSRKQTEDE), 164–204 (KTAS…RPAV), and 227–275 (AHPR…NDCF). Ser-322, Ser-420, Ser-423, and Ser-434 each carry phosphoserine. The tract at residues 418–442 (PSSEASVEDSIQADLKSDEELDDGV) is disordered. One copy of the WD 4 repeat lies at 474–514 (DHQIEVLLSEWSKNADMLFSIHPMDGSLLVWHVDWLDEYQP). Position 572 is a phosphoserine (Ser-572). WD repeat units lie at residues 578–619 (AHSK…ESAF) and 842–893 (KKRL…TPVS). Residues Ser-916 and Ser-922 each carry the phosphoserine modification. 3 WD repeats span residues 970–1008 (HLSSSSIYPVCSAPYLLATSCSDDKVRFWRCRVTNGESA), 1145–1193 (EDGS…PLSK), and 1208–1248 (GAPP…EPVI). Ser-1829, Ser-1896, Ser-1903, and Ser-1965 each carry phosphoserine. Disordered stretches follow at residues 2364–2406 (GQAN…PPAV) and 2431–2462 (QSRAEYDSEESLESDDEEEEDDDDALPSGLQL). Over residues 2385-2398 (SKVSARESPVSSSS) the composition is skewed to low complexity. The span at 2437-2455 (DSEESLESDDEEEEDDDDA) shows a compositional bias: acidic residues. WD repeat units follow at residues 2728–2769 (KAIN…TCFR), 2771–2810 (GGNSRITRMRFNYQGNKFGIVDADGYLSLYQTNWKCCPVT), 2822–2864 (CHNK…ANSL), 2870–2909 (CHDSGATVLAYAPKHQLLISGGRKGFTCIFDLRQRQQRQL), 2912–2951 (SHDSPVKAIAIDPTEEYFVTGSAEGNIKIWSLSSFSLLHT), and 2964–3002 (NIGTGVMQIETGPANHIFSCGADGTMKMRILPDQFSPLN).

In Mus musculus (Mouse), this protein is DmX-like protein 1 (Dmxl1).